Here is a 95-residue protein sequence, read N- to C-terminus: MSVDETTVRRIAHLARIAVTDEEVGPLKGELNAILAFVEQLGAVDVEGVEPMTSVTPMRMKKRADVVNDGGRASDIVANAPETEDNYFLVPKVVE.

This sequence belongs to the GatC family. As to quaternary structure, heterotrimer of A, B and C subunits.

The enzyme catalyses L-glutamyl-tRNA(Gln) + L-glutamine + ATP + H2O = L-glutaminyl-tRNA(Gln) + L-glutamate + ADP + phosphate + H(+). It catalyses the reaction L-aspartyl-tRNA(Asn) + L-glutamine + ATP + H2O = L-asparaginyl-tRNA(Asn) + L-glutamate + ADP + phosphate + 2 H(+). In terms of biological role, allows the formation of correctly charged Asn-tRNA(Asn) or Gln-tRNA(Gln) through the transamidation of misacylated Asp-tRNA(Asn) or Glu-tRNA(Gln) in organisms which lack either or both of asparaginyl-tRNA or glutaminyl-tRNA synthetases. The reaction takes place in the presence of glutamine and ATP through an activated phospho-Asp-tRNA(Asn) or phospho-Glu-tRNA(Gln). This chain is Aspartyl/glutamyl-tRNA(Asn/Gln) amidotransferase subunit C, found in Methylorubrum extorquens (strain CM4 / NCIMB 13688) (Methylobacterium extorquens).